Reading from the N-terminus, the 767-residue chain is Ribonucleoside-diphosphate reductase large subunit (767 aa).

Substrate-binding positions include Thr176, 191 to 192 (SC), Gly222, 392 to 396 (NLCAE), and 578 to 582 (PTAGT). A disulfide bridge connects residues Cys192 and Cys408. Catalysis depends on Asn392, which acts as the Proton acceptor. Cys394 (cysteine radical intermediate) is an active-site residue. Glu396 functions as the Proton acceptor in the catalytic mechanism.

This sequence belongs to the ribonucleoside diphosphate reductase large chain family. As to quaternary structure, heterotetramer composed of a homodimer of the large subunit (R1) and a homodimer of the small subunit (R2). Larger multisubunit protein complex are also active, composed of (R1)n(R2)n.

The catalysed reaction is a 2'-deoxyribonucleoside 5'-diphosphate + [thioredoxin]-disulfide + H2O = a ribonucleoside 5'-diphosphate + [thioredoxin]-dithiol. Its function is as follows. Ribonucleoside-diphosphate reductase holoenzyme provides the precursors necessary for viral DNA synthesis. Allows virus growth in non-dividing cells, as well as reactivation from latency in infected hosts. Catalyzes the biosynthesis of deoxyribonucleotides from the corresponding ribonucleotides. In Saimiri sciureus (Common squirrel monkey), this protein is Ribonucleoside-diphosphate reductase large subunit.